The following is a 3391-amino-acid chain: Genome polyprotein (3391 aa).

Residues 1–15 (MNNQRKKTARPSFNM) form an interaction with host EXOC1 region. The Cytoplasmic segment spans residues 1–101 (MNNQRKKTAR…LNIMNRRKRS (101 aa)). Positions 37 to 72 (LLSGQGPMKLVMAFIAFLRFLAIPPTAGILARWGSF) are hydrophobic; homodimerization of capsid protein C. A propeptide spans 101 to 114 (SVTMLLMLLPTALA) (ER anchor for the capsid protein C, removed in mature form by serine protease NS3). The helical transmembrane segment at 102 to 119 (VTMLLMLLPTALAFHLTT) threads the bilayer. Residues 120–242 (RGGEPHMIVS…QIQRVETWAL (123 aa)) lie on the Extracellular side of the membrane. A glycan (N-linked (GlcNAc...) asparagine; by host) is linked at asparagine 183. Residues 243–260 (RHPGFTVIALFLAHAIGT) traverse the membrane as a helical segment. A topological domain (cytoplasmic) is located at residue serine 261. Residues 262 to 280 (ITQKGIIFILLMLVTPSMA) traverse the membrane as a helical segment. Over 281 to 725 (MRCVGIGSRD…HQVFGTAYGV (445 aa)) the chain is Extracellular. 4 disulfide bridges follow: cysteine 283–cysteine 310, cysteine 340–cysteine 401, cysteine 354–cysteine 385, and cysteine 372–cysteine 396. N-linked (GlcNAc...) asparagine; by host glycosylation is present at asparagine 347. A fusion peptide region spans residues 378–391 (DRGWGNGCGLFGKG). N-linked (GlcNAc...) asparagine; by host glycosylation occurs at asparagine 433. 2 disulfides stabilise this stretch: cysteine 465–cysteine 565 and cysteine 582–cysteine 613. A helical transmembrane segment spans residues 726 to 746 (LFSGVSWTMKIGIGILLTWLG). At 747-752 (LNSRST) the chain is on the cytoplasmic side. Residues 753–773 (SLSMTCIAVGMVTLYLGVMVQ) traverse the membrane as a helical segment. The Extracellular segment spans residues 774–1198 (ADSGCVINWK…NASDRMGMGT (425 aa)). 6 cysteine pairs are disulfide-bonded: cysteine 778-cysteine 789, cysteine 829-cysteine 917, cysteine 953-cysteine 997, cysteine 1054-cysteine 1103, cysteine 1065-cysteine 1087, and cysteine 1086-cysteine 1090. Asparagine 904 and asparagine 981 each carry an N-linked (GlcNAc...) asparagine; by host glycan. Asparagine 1189 carries an N-linked (GlcNAc...) asparagine; by host glycan. A helical membrane pass occupies residues 1199–1219 (TYLALMATFKMRPMFAVGLLF). Over 1220–1225 (RRLTSR) the chain is Cytoplasmic. A helical membrane pass occupies residues 1226 to 1244 (EVLLLTIGLSLVASVELPN). Residues 1245 to 1268 (SLEELGDGLAMGIMILKLLTDFQS) lie on the Lumenal side of the membrane. A helical membrane pass occupies residues 1269–1289 (HQLWATLLSLTFVKTTFSLHY). Residue alanine 1290 is a topological domain, cytoplasmic. Residues 1291–1309 (WKTMAMVLSIVSLFPLCLS) form a helical membrane-spanning segment. Residues 1310-1314 (TTSQK) are Lumenal-facing. A helical membrane pass occupies residues 1315–1335 (TTWLPVLLGSLGCKPLTMFLI). Residues 1336–1345 (AENKIWGRKS) are Cytoplasmic-facing. Residues 1346–1366 (WPLNEGIMAVGIVSILLSSLL) form a helical membrane-spanning segment. The Lumenal portion of the chain corresponds to 1367–1369 (KND). Residues 1370–1390 (VPLAGPLIAGGMLIACYVISG) form a helical membrane-spanning segment. Topologically, residues 1391–1446 (SSADLSLEKAAEVSWEEEAEHSGASHNILVEVQDDGTMKIKDEERDDTLTILLKAT) are cytoplasmic. An interacts with and activates NS3 protease region spans residues 1397–1436 (LEKAAEVSWEEEAEHSGASHNILVEVQDDGTMKIKDEERD). An intramembrane region (helical) is located at residues 1447-1467 (LLAVSGVYPLSIPATLFVWYF). Residues 1468–2147 (WQKKKQRSGV…MEELPDTIET (680 aa)) are Cytoplasmic-facing. The Peptidase S7 domain maps to 1475–1652 (SGVLWDTPSP…KASQEGPLPE (178 aa)). Active-site charge relay system; for serine protease NS3 activity residues include histidine 1525, aspartate 1549, and serine 1609. The region spanning 1655–1811 (DEVFRKRNLT…QSNAVIQDEE (157 aa)) is the Helicase ATP-binding domain. The segment at 1659-1662 (RKRN) is important for RNA-binding. Residue 1668–1675 (LHPGSGKT) coordinates ATP. The DEAH box signature appears at 1759–1762 (DEAH). The region spanning 1821–1988 (SGYEWITDFP…IIPALFEPER (168 aa)) is the Helicase C-terminal domain. Lysine 1863 carries the N6-acetyllysine; by host modification. A helical transmembrane segment spans residues 2148–2168 (LMLLALIAVLTGGVTLFFLSG). Residues 2169 to 2170 (KG) are Lumenal-facing. The segment at residues 2171-2191 (LGKTSIGLLCVMASSVLLWMA) is an intramembrane region (helical). Position 2192 (serine 2192) is a topological domain, lumenal. The helical transmembrane segment at 2193–2213 (VEPHWIAASIILEFFLMVLLI) threads the bilayer. The Cytoplasmic portion of the chain corresponds to 2214-2228 (PEPDRQRTPQDNQLA). Residues 2229–2249 (YVVIGLLFMILTVAANEMGLL) traverse the membrane as a helical segment. Topologically, residues 2250-2275 (ETTKKDLGIGHVAAENHHHATMLDVD) are lumenal. An intramembrane region (helical) is located at residues 2276 to 2296 (LRPASAWTLYAVATTVITPMM). At 2297 to 2348 (RHTIENTTANISLTAIANQAAILMGLDKGWPISKMDIGVPLLALGCYSQVNP) the chain is on the lumenal side. Residues asparagine 2302 and asparagine 2306 are each glycosylated (N-linked (GlcNAc...) asparagine; by host). The helical transmembrane segment at 2349-2369 (LTLTAAVLMLVAHYAIIGPGL) threads the bilayer. Over 2370-2414 (QAKATREAQKRTAAGIMKNPTVDGIVAIDLDPVVYDAKFEKQLGQ) the chain is Cytoplasmic. A helical membrane pass occupies residues 2415 to 2435 (IMLLILCTSQILLMRTTWALC). Residues 2436–2460 (ESITLATGPLTTLWEGSPGKFWNTT) are Lumenal-facing. An N-linked (GlcNAc...) asparagine; by host glycan is attached at asparagine 2458. A helical transmembrane segment spans residues 2461–2481 (IAVSMANIFRGSYLAGAGLAF). The Cytoplasmic segment spans residues 2482–3391 (SLMKSLGGGR…NESDPEGALW (910 aa)). An mRNA cap 0-1 NS5-type MT domain is found at 2494–2755 (TGAKGKHWER…DVDLGAGTRH (262 aa)). Position 2548 (serine 2548) interacts with S-adenosyl-L-methionine. Residue serine 2548 is modified to Phosphoserine. The For 2'-O-MTase activity role is filled by lysine 2553. Positions 2569–2572 (VIDL) match the SUMO-interacting motif motif. Residues glycine 2578, tryptophan 2579, threonine 2596, lysine 2597, aspartate 2623, and valine 2624 each contribute to the S-adenosyl-L-methionine site. Catalysis depends on aspartate 2638, which acts as the For 2'-O-MTase activity. S-adenosyl-L-methionine is bound at residue isoleucine 2639. Catalysis depends on for 2'-O-MTase activity residues lysine 2672 and glutamate 2708. Position 2710 (tyrosine 2710) interacts with S-adenosyl-L-methionine. Residues glutamate 2929, histidine 2933, cysteine 2938, and cysteine 2941 each contribute to the Zn(2+) site. The region spanning 3019 to 3168 (GNMYADDTAG…KPIDDRFATA (150 aa)) is the RdRp catalytic domain. The Zn(2+) site is built by histidine 3203, cysteine 3219, and cysteine 3338.

It in the N-terminal section; belongs to the class I-like SAM-binding methyltransferase superfamily. mRNA cap 0-1 NS5-type methyltransferase family. As to quaternary structure, homodimer. Interacts (via N-terminus) with host EXOC1 (via C-terminus); this interaction results in EXOC1 degradation through the proteasome degradation pathway. Forms heterodimers with envelope protein E in the endoplasmic reticulum and Golgi. In terms of assembly, homodimer; in the endoplasmic reticulum and Golgi. Interacts with protein prM. Interacts with non-structural protein 1. As to quaternary structure, homodimer; Homohexamer when secreted. Interacts with envelope protein E. Interacts (via N-terminus) with serine protease NS3. In terms of assembly, forms a heterodimer with serine protease NS3. May form homooligomers. As to quaternary structure, forms a heterodimer with NS2B. Interacts with NS4B. Interacts with unphosphorylated RNA-directed RNA polymerase NS5; this interaction stimulates RNA-directed RNA polymerase NS5 guanylyltransferase activity. Interacts with host SHFL. Interacts with host MAVS; this interaction inhibits the synthesis of IFN-beta. Interacts with host SHFL. Interacts with host AUP1; the interaction occurs in the presence of Dengue virus NS4B and induces lipophagy which facilitates production of virus progeny particles. In terms of assembly, interacts with serine protease NS3. As to quaternary structure, homodimer. Interacts with host STAT2; this interaction inhibits the phosphorylation of the latter, and, when all viral proteins are present (polyprotein), targets STAT2 for degradation. Interacts with serine protease NS3. In terms of processing, specific enzymatic cleavages in vivo yield mature proteins. Cleavages in the lumen of endoplasmic reticulum are performed by host signal peptidase, whereas cleavages in the cytoplasmic side are performed by serine protease NS3. Signal cleavage at the 2K-4B site requires a prior NS3 protease-mediated cleavage at the 4A-2K site. Post-translationally, cleaved in post-Golgi vesicles by a host furin, releasing the mature small envelope protein M, and peptide pr. This cleavage is incomplete as up to 30% of viral particles still carry uncleaved prM. N-glycosylated. In terms of processing, N-glycosylated. The excreted form is glycosylated and this is required for efficient secretion of the protein from infected cells. Post-translationally, acetylated by host KAT5. Acetylation modulates NS3 RNA-binding and unwinding activities and plays an important positive role for viral replication. Sumoylation of RNA-directed RNA polymerase NS5 increases NS5 protein stability allowing proper viral RNA replication. In terms of processing, phosphorylated on serines residues. This phosphorylation may trigger NS5 nuclear localization.

The protein resides in the virion. It localises to the host nucleus. It is found in the host cytoplasm. The protein localises to the host perinuclear region. Its subcellular location is the secreted. The protein resides in the virion membrane. It localises to the host endoplasmic reticulum membrane. It is found in the host mitochondrion. The catalysed reaction is Selective hydrolysis of -Xaa-Xaa-|-Yaa- bonds in which each of the Xaa can be either Arg or Lys and Yaa can be either Ser or Ala.. It catalyses the reaction RNA(n) + a ribonucleoside 5'-triphosphate = RNA(n+1) + diphosphate. It carries out the reaction a ribonucleoside 5'-triphosphate + H2O = a ribonucleoside 5'-diphosphate + phosphate + H(+). The enzyme catalyses ATP + H2O = ADP + phosphate + H(+). The catalysed reaction is a 5'-end (5'-triphosphoguanosine)-ribonucleoside in mRNA + S-adenosyl-L-methionine = a 5'-end (N(7)-methyl 5'-triphosphoguanosine)-ribonucleoside in mRNA + S-adenosyl-L-homocysteine. It catalyses the reaction a 5'-end (N(7)-methyl 5'-triphosphoguanosine)-ribonucleoside in mRNA + S-adenosyl-L-methionine = a 5'-end (N(7)-methyl 5'-triphosphoguanosine)-(2'-O-methyl-ribonucleoside) in mRNA + S-adenosyl-L-homocysteine + H(+). In terms of biological role, plays a role in virus budding by binding to the cell membrane and gathering the viral RNA into a nucleocapsid that forms the core of a mature virus particle. During virus entry, may induce genome penetration into the host cytoplasm after hemifusion induced by the surface proteins. Can migrate to the cell nucleus where it modulates host functions. Overcomes the anti-viral effects of host EXOC1 by sequestering and degrading the latter through the proteasome degradation pathway. Functionally, inhibits RNA silencing by interfering with host Dicer. Its function is as follows. Prevents premature fusion activity of envelope proteins in trans-Golgi by binding to envelope protein E at pH6.0. After virion release in extracellular space, gets dissociated from E dimers. Acts as a chaperone for envelope protein E during intracellular virion assembly by masking and inactivating envelope protein E fusion peptide. prM is the only viral peptide matured by host furin in the trans-Golgi network probably to avoid catastrophic activation of the viral fusion activity in acidic Golgi compartment prior to virion release. prM-E cleavage is inefficient, and many virions are only partially matured. These uncleaved prM would play a role in immune evasion. In terms of biological role, may play a role in virus budding. Exerts cytotoxic effects by activating a mitochondrial apoptotic pathway through M ectodomain. May display a viroporin activity. Functionally, binds to host cell surface receptor and mediates fusion between viral and cellular membranes. Envelope protein is synthesized in the endoplasmic reticulum in the form of heterodimer with protein prM. They play a role in virion budding in the ER, and the newly formed immature particle is covered with 60 spikes composed of heterodimer between precursor prM and envelope protein E. The virion is transported to the Golgi apparatus where the low pH causes dissociation of PrM-E heterodimers and formation of E homodimers. prM-E cleavage is inefficient, and many virions are only partially matured. These uncleaved prM would play a role in immune evasion. Its function is as follows. Involved in immune evasion, pathogenesis and viral replication. Once cleaved off the polyprotein, is targeted to three destinations: the viral replication cycle, the plasma membrane and the extracellular compartment. Essential for viral replication. Required for formation of the replication complex and recruitment of other non-structural proteins to the ER-derived membrane structures. Excreted as a hexameric lipoparticle that plays a role against host immune response. Antagonizing the complement function. Binds to the host macrophages and dendritic cells. Inhibits signal transduction originating from Toll-like receptor 3 (TLR3). Disrupts the host endothelial glycocalyx layer of host pulmonary microvascular endothelial cells, inducing degradation of sialic acid and shedding of heparan sulfate proteoglycans. NS1 induces expression of sialidases, heparanase, and activates cathepsin L, which activates heparanase via enzymatic cleavage. These effects are probably linked to the endothelial hyperpermeability observed in severe dengue disease. In terms of biological role, component of the viral RNA replication complex that functions in virion assembly and antagonizes the host immune response. Functionally, required cofactor for the serine protease function of NS3. May have membrane-destabilizing activity and form viroporins. Its function is as follows. Displays three enzymatic activities: serine protease, NTPase and RNA c. NS3 serine protease, in association with NS2B, performs its autocleavage and cleaves the polyprotein at dibasic sites in the cytoplasm: C-prM, NS2A-NS2B, NS2B-NS3, NS3-NS4A, NS4A-2K and NS4B-NS5. NS3 RNA helicase binds RNA and unwinds dsRNA in the 3' to 5' direction. Regulates the ATPase activity of the NS3 helicase activity. NS4A allows NS3 helicase to conserve energy during unwinding. Plays a role in the inhibition of the host innate immune response. Interacts with host MAVS and thereby prevents the interaction between RIGI and MAVS. In turn, IFN-beta production is impaired. Interacts with host AUP1 which mediates induction of lipophagy in host cells and facilitates production of virus progeny particles. In terms of biological role, functions as a signal peptide for NS4B and is required for the interferon antagonism activity of the latter. Functionally, induces the formation of ER-derived membrane vesicles where the viral replication takes place. Inhibits interferon (IFN)-induced host STAT1 phosphorylation and nuclear translocation, thereby preventing the establishment of cellular antiviral state by blocking the IFN-alpha/beta pathway. Its function is as follows. Replicates the viral (+) and (-) RNA genome, and performs the capping of genomes in the cytoplasm. NS5 methylates viral RNA cap at guanine N-7 and ribose 2'-O positions. Besides its role in RNA genome replication, also prevents the establishment of cellular antiviral state by blocking the interferon-alpha/beta (IFN-alpha/beta) signaling pathway. Inhibits host TYK2 and STAT2 phosphorylation, thereby preventing activation of JAK-STAT signaling pathway. This Aedes aegypti (Yellowfever mosquito) protein is Genome polyprotein.